We begin with the raw amino-acid sequence, 132 residues long: Fatty acid-binding protein, brain (132 aa).

At Val-2 the chain carries N-acetylvaline. 127-129 (RHY) provides a ligand contact to a fatty acid.

Belongs to the calycin superfamily. Fatty-acid binding protein (FABP) family. As to expression, expressed in brain and other neural tissues.

It localises to the cytoplasm. In terms of biological role, B-FABP could be involved in the transport of a so far unknown hydrophobic ligand with potential morphogenic activity during CNS development. It is required for the establishment of the radial glial fiber system in developing brain, a system that is necessary for the migration of immature neurons to establish cortical layers. The sequence is that of Fatty acid-binding protein, brain (FABP7) from Homo sapiens (Human).